A 190-amino-acid polypeptide reads, in one-letter code: Peptidyl-prolyl cis-trans isomerase A (190 aa).

Residues methionine 1 to alanine 24 form the signal peptide. The PPIase cyclophilin-type domain occupies glycine 27 to valine 188.

It belongs to the cyclophilin-type PPIase family.

The protein localises to the periplasm. It carries out the reaction [protein]-peptidylproline (omega=180) = [protein]-peptidylproline (omega=0). In terms of biological role, PPIases accelerate the folding of proteins. It catalyzes the cis-trans isomerization of proline imidic peptide bonds in oligopeptides. The polypeptide is Peptidyl-prolyl cis-trans isomerase A (ppiA) (Escherichia coli O157:H7).